A 177-amino-acid chain; its full sequence is ATP synthase subunit delta (177 aa).

It belongs to the ATPase delta chain family. In terms of assembly, F-type ATPases have 2 components, F(1) - the catalytic core - and F(0) - the membrane proton channel. F(1) has five subunits: alpha(3), beta(3), gamma(1), delta(1), epsilon(1). F(0) has three main subunits: a(1), b(2) and c(10-14). The alpha and beta chains form an alternating ring which encloses part of the gamma chain. F(1) is attached to F(0) by a central stalk formed by the gamma and epsilon chains, while a peripheral stalk is formed by the delta and b chains.

The protein localises to the cell inner membrane. Its function is as follows. F(1)F(0) ATP synthase produces ATP from ADP in the presence of a proton or sodium gradient. F-type ATPases consist of two structural domains, F(1) containing the extramembraneous catalytic core and F(0) containing the membrane proton channel, linked together by a central stalk and a peripheral stalk. During catalysis, ATP synthesis in the catalytic domain of F(1) is coupled via a rotary mechanism of the central stalk subunits to proton translocation. This protein is part of the stalk that links CF(0) to CF(1). It either transmits conformational changes from CF(0) to CF(1) or is implicated in proton conduction. This chain is ATP synthase subunit delta, found in Aliivibrio fischeri (strain MJ11) (Vibrio fischeri).